Here is a 63-residue protein sequence, read N- to C-terminus: MRIHYLLFSFLLVLLSPLSVFTQSINNPVSCVTHGGICWGRCPGSFRQIGTCGLGKVRCCKKK.

An N-terminal signal peptide occupies residues 1-22 (MRIHYLLFSFLLVLLSPLSVFT). Gln-23 is subject to Pyrrolidone carboxylic acid. 3 cysteine pairs are disulfide-bonded: Cys-31/Cys-59, Cys-38/Cys-52, and Cys-42/Cys-60.

This sequence belongs to the beta-defensin family.

Its subcellular location is the secreted. Has antibacterial activity. In Rattus norvegicus (Rat), this protein is Beta-defensin 5 (Defb5).